The chain runs to 191 residues: Protein Ves (191 aa).

Belongs to the Ves family.

The sequence is that of Protein Ves from Shigella flexneri serotype 5b (strain 8401).